Here is a 156-residue protein sequence, read N- to C-terminus: Large ribosomal subunit protein uL23 (156 aa).

The segment covering 1-19 has biased composition (basic and acidic residues); the sequence is MAPKAKKEAPAPPKAEAKA. The tract at residues 1–67 is disordered; sequence MAPKAKKEAP…PKYPRKSAPR (67 aa). A2 carries the n,N,N-trimethylalanine modification. A Glycyl lysine isopeptide (Lys-Gly) (interchain with G-Cter in SUMO2) cross-link involves residue K14. The span at 20 to 67 shows a compositional bias: basic residues; the sequence is KALKAKKAVLKGVHSHKKKKIRTSPTFRRPKTLRLRRQPKYPRKSAPR. Positions 32 to 74 are beta-like import receptor binding (BIB) domain; the sequence is VHSHKKKKIRTSPTFRRPKTLRLRRQPKYPRKSAPRRNKLDHY. The residue at position 41 (R41) is a Citrulline. S43 bears the Phosphoserine mark. T45 bears the Phosphothreonine mark. At K70 the chain carries N6-acetyllysine.

It belongs to the universal ribosomal protein uL23 family. In terms of assembly, component of the large ribosomal subunit. Interacts with LYAR and GNL2. Interacts with MDM2; this interaction may promote MDM2-mediated p53/TP53 polyubiquitination. Directly interacts (via BIB domain) with IPO5, IPO7, KPNB1 and TNPO1; these interactions are involved in RPL23A nuclear import for the assembly of ribosomal subunits. Interacts with IPO8. N-terminus is methylated by METTL11A/NTM1. Post-translationally, citrullinated by PADI4.

The protein resides in the cytoplasm. Its subcellular location is the nucleus. Component of the large ribosomal subunit. The ribosome is a large ribonucleoprotein complex responsible for the synthesis of proteins in the cell. Binds a specific region on the 26S rRNA. May promote p53/TP53 degradation possibly through the stimulation of MDM2-mediated TP53 polyubiquitination. The sequence is that of Large ribosomal subunit protein uL23 (RPL23A) from Bos taurus (Bovine).